The chain runs to 229 residues: Large ribosomal subunit protein uL1 (229 aa).

Belongs to the universal ribosomal protein uL1 family. In terms of assembly, part of the 50S ribosomal subunit.

Functionally, binds directly to 23S rRNA. The L1 stalk is quite mobile in the ribosome, and is involved in E site tRNA release. Protein L1 is also a translational repressor protein, it controls the translation of the L11 operon by binding to its mRNA. In Pasteurella multocida (strain Pm70), this protein is Large ribosomal subunit protein uL1.